The chain runs to 347 residues: 4-hydroxy-2-oxovalerate aldolase 2 (347 aa).

A Pyruvate carboxyltransferase domain is found at 7–259; the sequence is VRITDTSLRD…KTGIDFFDIA (253 aa). Substrate is bound at residue 15–16; sequence RD. Aspartate 16 contacts Mn(2+). Histidine 19 acts as the Proton acceptor in catalysis. 2 residues coordinate substrate: serine 169 and histidine 198. Positions 198 and 200 each coordinate Mn(2+). Tyrosine 289 is a substrate binding site.

It belongs to the 4-hydroxy-2-oxovalerate aldolase family.

The catalysed reaction is (S)-4-hydroxy-2-oxopentanoate = acetaldehyde + pyruvate. The sequence is that of 4-hydroxy-2-oxovalerate aldolase 2 from Mycobacterium marinum (strain ATCC BAA-535 / M).